Consider the following 875-residue polypeptide: MSKIKISDLAKEFGMTWKELAGEIEELTGKTVKSPSTKIDEEIVSLLRDVLQPAEEVEEAVEKKVEKEKGYRIFELSHDWNIPFEELAEDLKAIGYTKSIDNFTILDEETVNRLKDYIKEKKEKEKEKKKEEKEEKKVKVEKKVEEKPVEVKKEEKKEEKVEKVEKKEEKVQKKPEKKEVKRKEKIVAKEEKPERKKAVEEKPKKKEVKEVKKVEKPKVEVVEEKEETKIKIPEAEIRKETKEEKAELEALRKLMGPQPKKKKKKKKKKEEEKAPVETKEKEEELKIAIIPEVVTVRELSDILDMPVNEIMAELLKRGILATVNQTIDPEIALQIAEEHGYLAEIQKEGEEVKIVEELPQEEKKKLLGEEEEEEENLVERPPVVTVMGHVDHGKTTLLDTIRKTDVAAKEKGGITQHIGAYKIKLSNGKEITFLDTPGHEAFTTLRARGSKVADIAVLVVAADDGVKPQTVEAINHAKSAGVPIIVAINKIDKPGADPERVKRELAQYELIPEEWGGDTIMVPVSAKTGQNVEELLENILLVSEILELKANPNRPAIGTIIESKLDPKRGPVATVLIENGTLHQGDYFVAGFTWGKVRAMFDERGRQVKEATPGTPVEVLGFNEVPQAGDKFVVKPSEREARLLAEQRKQKYEEELQAKRTRIHLENLKDVKEINIILKADVQGSLEAITKSIEELSEKFEDVTINIIHSGIGAITESDVMLAAASNALIIGFNVRPDASARKAAEEEDVDIKIYGIIYDLIDDLEKALKGMLTPKEREVLLGICEVKQIFRIKGVGTVAGCMVTEGVIRRNAKARLVRDGVVIYDGEITSLKRFKEDVKEVAKGYECGLMLKDFNDIKPGDQIEAYEIVQEKAE.

Disordered stretches follow at residues 123–204 and 240–278; these read EKEK…EKPK and ETKEEKAELEALRKLMGPQPKKKKKKKKKKEEEKAPVET. Positions 240–252 are enriched in basic and acidic residues; that stretch reads ETKEEKAELEALR. Residues 259–268 are compositionally biased toward basic residues; sequence PKKKKKKKKK. A compositionally biased stretch (basic and acidic residues) spans 269 to 278; sequence KEEEKAPVET. In terms of domain architecture, tr-type G spans 379–547; sequence ERPPVVTVMG…NILLVSEILE (169 aa). A G1 region spans residues 388 to 395; it reads GHVDHGKT. Position 388 to 395 (388 to 395) interacts with GTP; it reads GHVDHGKT. A G2 region spans residues 413–417; it reads GITQH. Residues 435-438 are G3; that stretch reads DTPG. Residues 435–439 and 489–492 contribute to the GTP site; these read DTPGH and NKID. Residues 489–492 are G4; the sequence is NKID. The tract at residues 525 to 527 is G5; the sequence is SAK.

The protein belongs to the TRAFAC class translation factor GTPase superfamily. Classic translation factor GTPase family. IF-2 subfamily.

The protein resides in the cytoplasm. Its function is as follows. One of the essential components for the initiation of protein synthesis. Protects formylmethionyl-tRNA from spontaneous hydrolysis and promotes its binding to the 30S ribosomal subunits. Also involved in the hydrolysis of GTP during the formation of the 70S ribosomal complex. This is Translation initiation factor IF-2 from Persephonella marina (strain DSM 14350 / EX-H1).